The following is an 885-amino-acid chain: Leucine--tRNA ligase (885 aa).

Positions 53-63 (PYPSGKLHMGH) match the 'HIGH' region motif. The 'KMSKS' region motif lies at 631–635 (KMSKS). K634 is a binding site for ATP.

The protein belongs to the class-I aminoacyl-tRNA synthetase family.

It is found in the cytoplasm. It catalyses the reaction tRNA(Leu) + L-leucine + ATP = L-leucyl-tRNA(Leu) + AMP + diphosphate. The polypeptide is Leucine--tRNA ligase (Psychrobacter sp. (strain PRwf-1)).